The following is a 430-amino-acid chain: ATP-dependent RNA helicase RhlB (430 aa).

Residues 9-37 (QKFSDFALHPQVIEALESKGFHNCTPIQA) carry the Q motif motif. Residues 40–219 (LPLALSGRDV…FEQMNNAEYV (180 aa)) form the Helicase ATP-binding domain. Position 53-60 (53-60 (AQTGTGKT)) interacts with ATP. Residues 165-168 (DEAD) carry the DEAD box motif. The Helicase C-terminal domain occupies 245–390 (RLLQTLLEEE…VSKYNSDALM (146 aa)). Positions 392 to 430 (DLPAPKRLTRPPRSNNGPRRHNNAPRRSGAPRNNRKRAD) are disordered.

It belongs to the DEAD box helicase family. RhlB subfamily. As to quaternary structure, component of the RNA degradosome, which is a multiprotein complex involved in RNA processing and mRNA degradation.

The protein localises to the cytoplasm. The enzyme catalyses ATP + H2O = ADP + phosphate + H(+). Functionally, DEAD-box RNA helicase involved in RNA degradation. Has RNA-dependent ATPase activity and unwinds double-stranded RNA. In Pectobacterium carotovorum subsp. carotovorum (strain PC1), this protein is ATP-dependent RNA helicase RhlB.